The following is a 33-amino-acid chain: Potassium channel toxin alpha-KTx 10.4 (33 aa).

3 cysteine pairs are disulfide-bonded: Cys3–Cys22, Cys8–Cys27, and Cys12–Cys29.

This sequence belongs to the short scorpion toxin superfamily. Potassium channel inhibitor family. Alpha-KTx 10 subfamily. Expressed by the venom gland.

It is found in the secreted. In terms of biological role, blocks human voltage-gated potassium channel Kv1.2/KCNA2 (IC(50)=3.6 nM) and Kv1.3/KCNA3 (IC(50)=72 nM). The chain is Potassium channel toxin alpha-KTx 10.4 from Centruroides tecomanus (Scorpion).